Reading from the N-terminus, the 62-residue chain is Large ribosomal subunit protein bL32 (62 aa).

Over residues Met-1–Arg-16 the composition is skewed to basic residues. The segment at Met-1–Val-62 is disordered. Basic and acidic residues predominate over residues Val-28 to Leu-44.

This sequence belongs to the bacterial ribosomal protein bL32 family.

The polypeptide is Large ribosomal subunit protein bL32 (Azorhizobium caulinodans (strain ATCC 43989 / DSM 5975 / JCM 20966 / LMG 6465 / NBRC 14845 / NCIMB 13405 / ORS 571)).